The following is a 505-amino-acid chain: uncharacterized protein (505 aa).

The disordered stretch occupies residues 1–52 (MVDGSIHVPVQSHEGQHDNSSSLNEEIQTSQDPLGIVESYQESSTSDFDKSH). Positions 18–32 (DNSSSLNEEIQTSQD) are enriched in polar residues. 10 helical membrane passes run 141 to 161 (FWIVFFLGQVLSLCITATNTF), 173 to 193 (AFQTFLVYALLTLVYTPYTVF), 208 to 228 (GWKYIIFAFFDVEGNYFVVLA), 235 to 255 (LSASLLDSWATVAVVILSFIF), 265 to 285 (ILGVVACIGGLVLLVVSDVIS), 290 to 310 (SAVNPGLGDGYMIIGATCYGV), 326 to 346 (VVIGQLSLYGSIISIIQTFIF), 362 to 382 (GYLAGFILVMFLLYSLAPILF), 389 to 409 (FYNISLLTSDFWSLVIGIHVF), and 415 to 435 (WLYPIAFVLIILGLFVYHVFV). Phosphoserine is present on residues S463, S466, and S467.

The protein belongs to the SLC35F solute transporter family.

It localises to the golgi apparatus membrane. This is an uncharacterized protein from Schizosaccharomyces pombe (strain 972 / ATCC 24843) (Fission yeast).